The following is a 357-amino-acid chain: Histidinol-phosphate aminotransferase 1 (357 aa).

K217 carries the post-translational modification N6-(pyridoxal phosphate)lysine.

Belongs to the class-II pyridoxal-phosphate-dependent aminotransferase family. Histidinol-phosphate aminotransferase subfamily. In terms of assembly, homodimer. It depends on pyridoxal 5'-phosphate as a cofactor.

It carries out the reaction L-histidinol phosphate + 2-oxoglutarate = 3-(imidazol-4-yl)-2-oxopropyl phosphate + L-glutamate. Its pathway is amino-acid biosynthesis; L-histidine biosynthesis; L-histidine from 5-phospho-alpha-D-ribose 1-diphosphate: step 7/9. This is Histidinol-phosphate aminotransferase 1 from Burkholderia lata (strain ATCC 17760 / DSM 23089 / LMG 22485 / NCIMB 9086 / R18194 / 383).